A 269-amino-acid chain; its full sequence is Chymotrypsin-like elastase family member 2A (269 aa).

The N-terminal stretch at 1 to 16 is a signal peptide; it reads MIRALLLSTLVAGALS. A propeptide spans 17 to 28 (activation peptide); the sequence is CGVPTYPPQLSR. The region spanning 29 to 267 is the Peptidase S1 domain; it reads VVGGEDARPN…YNDWISSVIE (239 aa). A disulfide bond links Cys58 and Cys74. Residues His73 and Asp121 each act as charge relay system in the active site. Intrachain disulfides connect Cys155–Cys222, Cys186–Cys202, and Cys212–Cys243. Ser216 (charge relay system) is an active-site residue.

It belongs to the peptidase S1 family. Elastase subfamily. Interacts with CPA1. Interacts with SERPINA1. In terms of tissue distribution, pancreas.

The protein resides in the secreted. It carries out the reaction Preferential cleavage: Leu-|-Xaa, Met-|-Xaa and Phe-|-Xaa. Hydrolyzes elastin.. Elastase that enhances insulin signaling and might have a physiologic role in cellular glucose metabolism. Circulates in plasma and reduces platelet hyperactivation, triggers both insulin secretion and degradation, and increases insulin sensitivity. The polypeptide is Chymotrypsin-like elastase family member 2A (CELA2A) (Bos taurus (Bovine)).